The sequence spans 96 residues: Phosphoribosyl-ATP pyrophosphatase (96 aa).

This sequence belongs to the PRA-PH family.

Its subcellular location is the cytoplasm. The catalysed reaction is 1-(5-phospho-beta-D-ribosyl)-ATP + H2O = 1-(5-phospho-beta-D-ribosyl)-5'-AMP + diphosphate + H(+). Its pathway is amino-acid biosynthesis; L-histidine biosynthesis; L-histidine from 5-phospho-alpha-D-ribose 1-diphosphate: step 2/9. This chain is Phosphoribosyl-ATP pyrophosphatase, found in Methanococcus maripaludis (strain DSM 14266 / JCM 13030 / NBRC 101832 / S2 / LL).